The following is a 155-amino-acid chain: 2-C-methyl-D-erythritol 2,4-cyclodiphosphate synthase (155 aa).

A divalent metal cation is bound by residues D8 and H10. 4-CDP-2-C-methyl-D-erythritol 2-phosphate contacts are provided by residues 8–10 (DVH) and 34–35 (HS). Residue H42 participates in a divalent metal cation binding. 4-CDP-2-C-methyl-D-erythritol 2-phosphate contacts are provided by residues 56-58 (DIG), 61-65 (FPDSD), 132-135 (TTEE), F139, and R142.

It belongs to the IspF family. As to quaternary structure, homotrimer. Requires a divalent metal cation as cofactor.

The catalysed reaction is 4-CDP-2-C-methyl-D-erythritol 2-phosphate = 2-C-methyl-D-erythritol 2,4-cyclic diphosphate + CMP. It participates in isoprenoid biosynthesis; isopentenyl diphosphate biosynthesis via DXP pathway; isopentenyl diphosphate from 1-deoxy-D-xylulose 5-phosphate: step 4/6. In terms of biological role, involved in the biosynthesis of isopentenyl diphosphate (IPP) and dimethylallyl diphosphate (DMAPP), two major building blocks of isoprenoid compounds. Catalyzes the conversion of 4-diphosphocytidyl-2-C-methyl-D-erythritol 2-phosphate (CDP-ME2P) to 2-C-methyl-D-erythritol 2,4-cyclodiphosphate (ME-CPP) with a corresponding release of cytidine 5-monophosphate (CMP). The chain is 2-C-methyl-D-erythritol 2,4-cyclodiphosphate synthase from Clostridium acetobutylicum (strain ATCC 824 / DSM 792 / JCM 1419 / IAM 19013 / LMG 5710 / NBRC 13948 / NRRL B-527 / VKM B-1787 / 2291 / W).